The chain runs to 336 residues: MTYAIHESLTLLSQKQNLPEELTFTVVQDLLSGELTPAQIGGLLLGLSLKGETPEEIAAFAQALRGAGLKIKAPAGTLDTCGTGGDRSGTFNISTTAAFVIAGAGVPVAKHGNRFASGRCGSADVLEQLGISLKATPESSERHLQHIGMTFLFAQVYHPAMAKVARERRELGIRTIFNLLGPLLNPAGAPYQLLGVSSPSLLPKMAKALQILGSKRAVVAVGEDGLDEVTLTGATQAILIDGGAIQPFIIRPEEYGLNLCSLQDLQGGTPAENGQITLRILQGKKGPQRDIVLLNAGTALYAANKAAGIREGIALAAESLDSGKALSILEKLKASA.

5-phospho-alpha-D-ribose 1-diphosphate is bound by residues Gly-82, Gly-85–Asp-86, Thr-90, Asn-92–Thr-95, Lys-110–Gly-118, and Ser-122. Gly-82 contributes to the anthranilate binding site. Residue Ser-94 coordinates Mg(2+). Anthranilate is bound at residue Asn-113. Arg-168 provides a ligand contact to anthranilate. Positions 227 and 228 each coordinate Mg(2+).

Belongs to the anthranilate phosphoribosyltransferase family. In terms of assembly, homodimer. It depends on Mg(2+) as a cofactor.

The catalysed reaction is N-(5-phospho-beta-D-ribosyl)anthranilate + diphosphate = 5-phospho-alpha-D-ribose 1-diphosphate + anthranilate. Its pathway is amino-acid biosynthesis; L-tryptophan biosynthesis; L-tryptophan from chorismate: step 2/5. In terms of biological role, catalyzes the transfer of the phosphoribosyl group of 5-phosphorylribose-1-pyrophosphate (PRPP) to anthranilate to yield N-(5'-phosphoribosyl)-anthranilate (PRA). This chain is Anthranilate phosphoribosyltransferase, found in Desulfitobacterium hafniense (strain DSM 10664 / DCB-2).